Here is a 363-residue protein sequence, read N- to C-terminus: Methyltransferase pynC (363 aa).

S-adenosyl-L-methionine contacts are provided by residues 199–200 (GG), Asp225, 254–255 (SF), Arg270, and Arg271.

This sequence belongs to the class I-like SAM-binding methyltransferase superfamily. Cation-independent O-methyltransferase family.

It functions in the pathway secondary metabolite biosynthesis. Its function is as follows. Methyltransferase; part of the gene cluster that mediates the biosynthesis of pyranonigrins, a family of antioxidative compounds. The first step of pyranonigrins biosynthesis is performed by the hybrid PKS-NRPS synthetase that condenses 6 malonyl-CoA units to an acetyl starter unit, to form a 1,3,5-trioxotetradecane-6,8-dienyl-ACP. The enoyl reductase (ER) domain of pynA is likely to be functional during the first two rounds of polyketide chain extension, to generate the saturated C-C bonds of the alkyl side chain. PynA subsequently forms the amide bond between the acyl chain and L-serine. Although pynA has a terminal reductase domain, it appears to require the thioesterase pynI for the release of the straight-chain intermediate from pynA via the formation of a tetramic acid pyranonigrin J. The methyltransferase pynC then coverts pyranonigrin J to pyranonigrin I via N-methylation. The FAD-dependent monooxygenase pynG catalyzes an epoxidation-mediated cyclization to form the dihydro-gamma-pyrone moiety, followed by pynD-catalyzed oxidation of the alcohol to the ketone and enolization to yield the characteristic tetramic acid-fused gamma-pyrone core of pyranonigrin H. Pyranonigrin H is substrate of pynH for dehydration-mediated exo-methylene formation from the serine side chain to produce pyranonigrin E, before the oxidase pynE reduces the exo-methylene of pyranonigrin E into a pendant methyl to form pyranonigrin G. The FAD-linked oxidoreductase pynB performs the reverse reaction and converts pyranonigrin G back to pyranonigrin E. The protein is Methyltransferase pynC of Aspergillus niger (strain ATCC MYA-4892 / CBS 513.88 / FGSC A1513).